The following is a 488-amino-acid chain: Glutamyl-tRNA(Gln) amidotransferase subunit A (488 aa).

Catalysis depends on charge relay system residues Lys-77 and Ser-152. Residue Ser-176 is the Acyl-ester intermediate of the active site.

Belongs to the amidase family. GatA subfamily. In terms of assembly, heterotrimer of A, B and C subunits.

It carries out the reaction L-glutamyl-tRNA(Gln) + L-glutamine + ATP + H2O = L-glutaminyl-tRNA(Gln) + L-glutamate + ADP + phosphate + H(+). Functionally, allows the formation of correctly charged Gln-tRNA(Gln) through the transamidation of misacylated Glu-tRNA(Gln) in organisms which lack glutaminyl-tRNA synthetase. The reaction takes place in the presence of glutamine and ATP through an activated gamma-phospho-Glu-tRNA(Gln). The protein is Glutamyl-tRNA(Gln) amidotransferase subunit A of Streptococcus pyogenes serotype M6 (strain ATCC BAA-946 / MGAS10394).